A 353-amino-acid polypeptide reads, in one-letter code: Anthranilate phosphoribosyltransferase (353 aa).

Residues G79, 82–83, T87, 89–92, 107–115, and S119 contribute to the 5-phospho-alpha-D-ribose 1-diphosphate site; these read GD, NIST, and KHGNHSFTS. G79 lines the anthranilate pocket. S91 provides a ligand contact to Mg(2+). Residue N110 participates in anthranilate binding. R165 serves as a coordination point for anthranilate. The Mg(2+) site is built by D223 and E224.

This sequence belongs to the anthranilate phosphoribosyltransferase family. Homodimer. Mg(2+) serves as cofactor.

It catalyses the reaction N-(5-phospho-beta-D-ribosyl)anthranilate + diphosphate = 5-phospho-alpha-D-ribose 1-diphosphate + anthranilate. The protein operates within amino-acid biosynthesis; L-tryptophan biosynthesis; L-tryptophan from chorismate: step 2/5. Functionally, catalyzes the transfer of the phosphoribosyl group of 5-phosphorylribose-1-pyrophosphate (PRPP) to anthranilate to yield N-(5'-phosphoribosyl)-anthranilate (PRA). The polypeptide is Anthranilate phosphoribosyltransferase (Methanococcoides burtonii (strain DSM 6242 / NBRC 107633 / OCM 468 / ACE-M)).